A 627-amino-acid chain; its full sequence is Protein fem-1 homolog B (627 aa).

6 ANK repeats span residues 45–74 (QRSTPLIIAARNGHTKVVRLLLEHYRVQTQ), 87–116 (DGATALWCAAGAGHFEVVKLLVSHGANVNH), 120–149 (TNSTPLRAACFDGRLDIVKYLVENNANISI), 153–182 (YDNTCLMIAAYKGHTDVVRYLLEQHADPNA), 186–215 (CGATALHFAAEAGHLEIVRELVKWKAAMMV), and 218–248 (HGMTPLKVAAESCKADVVELLLAHAGCNRRS). One copy of the TPR repeat lies at 344–377 (SHPIIYRGAVYADNMEFEQCIKLWLHALHLRQKG). ANK repeat units follow at residues 483–527 (DGST…DVNA) and 531–568 (EGNSPLHLIVQYHRPISDFLTLHSIIISLVEAGAHTDM).

The protein belongs to the fem-1 family. Component of a CRL2 E3 ubiquitin-protein ligase complex, also named ECS (Elongin BC-CUL2/5-SOCS-box protein) complex.

The protein resides in the cytoplasm. Its subcellular location is the nucleus. Its pathway is protein modification; protein ubiquitination. Its function is as follows. Substrate-recognition component of a Cul2-RING (CRL2) E3 ubiquitin-protein ligase complex of the DesCEND (destruction via C-end degrons) pathway, which recognizes a C-degron located at the extreme C terminus of target proteins, leading to their ubiquitination and degradation. The C-degron recognized by the DesCEND pathway is usually a motif of less than ten residues and can be present in full-length proteins, truncated proteins or proteolytically cleaved forms. The CRL2(FEM1B) complex specifically recognizes proteins ending with -Gly-Leu-Asp-Arg, leading to their ubiquitination and degradation. The polypeptide is Protein fem-1 homolog B (Gallus gallus (Chicken)).